A 228-amino-acid chain; its full sequence is Protein JAZ7 (228 aa).

The region spanning 101 to 136 (LSPNESTLTIFYMGEVHIFPGISPEKAELIIDLVSK) is the Tify domain. A Jas motif is present at residues 176–199 (MARRATLARFLEKRKHRLIKARPY). Positions 177 to 184 (ARRATLAR) match the Nuclear localization signal motif.

The protein belongs to the TIFY/JAZ family. As to quaternary structure, interacts with MYC2 (via N-terminus). JAZ7 competes with MED25 for binding to MYC2. Interacts with MTB1 (via N-terminus).

The protein resides in the nucleus. Its function is as follows. Repressor of jasmonate responses. This chain is Protein JAZ7, found in Solanum lycopersicum (Tomato).